The sequence spans 172 residues: 3-hydroxydecanoyl-[acyl-carrier-protein] dehydratase (172 aa).

The active site involves His-71.

Belongs to the thioester dehydratase family. FabA subfamily. Homodimer.

It is found in the cytoplasm. It catalyses the reaction a (3R)-hydroxyacyl-[ACP] = a (2E)-enoyl-[ACP] + H2O. It carries out the reaction (3R)-hydroxydecanoyl-[ACP] = (2E)-decenoyl-[ACP] + H2O. The catalysed reaction is (2E)-decenoyl-[ACP] = (3Z)-decenoyl-[ACP]. It participates in lipid metabolism; fatty acid biosynthesis. In terms of biological role, necessary for the introduction of cis unsaturation into fatty acids. Catalyzes the dehydration of (3R)-3-hydroxydecanoyl-ACP to E-(2)-decenoyl-ACP and then its isomerization to Z-(3)-decenoyl-ACP. Can catalyze the dehydratase reaction for beta-hydroxyacyl-ACPs with saturated chain lengths up to 16:0, being most active on intermediate chain length. The polypeptide is 3-hydroxydecanoyl-[acyl-carrier-protein] dehydratase (Escherichia coli (strain SE11)).